The primary structure comprises 458 residues: Probable asparagine--tRNA ligase, cytoplasmic (458 aa).

The protein belongs to the class-II aminoacyl-tRNA synthetase family.

Its subcellular location is the cytoplasm. The catalysed reaction is tRNA(Asn) + L-asparagine + ATP = L-asparaginyl-tRNA(Asn) + AMP + diphosphate + H(+). The protein is Probable asparagine--tRNA ligase, cytoplasmic of Enterocytozoon bieneusi (strain H348) (Microsporidian parasite).